The chain runs to 99 residues: Putative RNA-binding protein RbpE (99 aa).

One can recognise an RRM domain in the interval 2–79 (SIYVGNLSYS…RVLKVNKARP (78 aa)). The tract at residues 78–99 (RPREEKGARSGGGSWSRNNGGY) is disordered. The segment covering 86–99 (RSGGGSWSRNNGGY) has biased composition (gly residues).

The protein is Putative RNA-binding protein RbpE (rbpE) of Nostoc sp. (strain PCC 7120 / SAG 25.82 / UTEX 2576).